Reading from the N-terminus, the 601-residue chain is Putative helicase 7 (601 aa).

A Helicase ATP-binding domain is found at 17-182; it reads QSFLMSDKNL…IIDAEIIKTD (166 aa). An ATP-binding site is contributed by 30–37; the sequence is APTGTGKS. The DEAH box motif lies at 129–132; sequence DEIH. Residues 208-375 enclose the Helicase C-terminal domain; sequence LKEDFIKKMV…VLEDFLLALI (168 aa).

This chain is Putative helicase 7 (SIFV0007), found in Saccharolobus islandicus (Sulfolobus islandicus).